We begin with the raw amino-acid sequence, 232 residues long: Proteasome subunit alpha type-2 (232 aa).

The protein belongs to the peptidase T1A family. The 26S proteasome consists of a 20S proteasome core and two 19S regulatory subunits. The 20S proteasome core is composed of 28 subunits that are arranged in four stacked rings, resulting in a barrel-shaped structure. The two end rings are each formed by seven alpha subunits, and the two central rings are each formed by seven beta subunits. The catalytic chamber with the active sites is on the inside of the barrel.

It localises to the cytoplasm. It is found in the nucleus. In terms of biological role, the proteasome is a multicatalytic proteinase complex which is characterized by its ability to cleave peptides with Arg, Phe, Tyr, Leu, and Glu adjacent to the leaving group at neutral or slightly basic pH. The proteasome has an ATP-dependent proteolytic activity. This chain is Proteasome subunit alpha type-2 (psmA2), found in Dictyostelium discoideum (Social amoeba).